A 629-amino-acid polypeptide reads, in one-letter code: (-)-alpha-pinene synthase, chloroplastic (629 aa).

The N-terminal 48 residues, 1-48 (MSPVSVISLPSDLCLPTSFIDRSGRELIPLHITIPNVAMRRQGKLMTR), are a transit peptide targeting the chloroplast. Positions 380, 384, and 532 each coordinate Mg(2+). Positions 380-384 (DDMYD) match the DDXXD motif motif. Position 540 (serine 540) interacts with K(+).

The protein belongs to the terpene synthase family. Tpsd subfamily. The cofactor is Mg(2+). Mn(2+) serves as cofactor. Requires K(+) as cofactor.

The protein localises to the plastid. It localises to the chloroplast. The enzyme catalyses (2E)-geranyl diphosphate = (1S,5S)-alpha-pinene + diphosphate. It participates in terpene metabolism; oleoresin biosynthesis. Functionally, involved in defensive oleoresin formation in conifers in response to insect attack or other injury. Involved in monoterpene (C10) olefins biosynthesis. Produces mainly (-)-alpha-pinene (79%) and lesser amounts of (-)-beta-pinene (4.2%), nearly racemic mixtures of camphene (2.8% (+)/2.2% (-)) and limonene (2.4% (+)/3.7% (-)), as well as small amounts of (+)-alpha-pinene (3.3%) and (+)-beta-pinene (2.4%). The protein is (-)-alpha-pinene synthase, chloroplastic (PT1) of Pinus taeda (Loblolly pine).